The chain runs to 367 residues: Nodulation protein NolF (367 aa).

The protein belongs to the membrane fusion protein (MFP) (TC 8.A.1) family.

Its function is as follows. Involved in the production of Medicago-specific nodulation signal molecule. This is Nodulation protein NolF (nolF) from Rhizobium meliloti (strain 1021) (Ensifer meliloti).